A 291-amino-acid polypeptide reads, in one-letter code: Tryptophan synthase alpha chain (291 aa).

Residues E69 and D80 each act as proton acceptor in the active site.

The protein belongs to the TrpA family. Tetramer of two alpha and two beta chains.

The enzyme catalyses (1S,2R)-1-C-(indol-3-yl)glycerol 3-phosphate + L-serine = D-glyceraldehyde 3-phosphate + L-tryptophan + H2O. The protein operates within amino-acid biosynthesis; L-tryptophan biosynthesis; L-tryptophan from chorismate: step 5/5. Its function is as follows. The alpha subunit is responsible for the aldol cleavage of indoleglycerol phosphate to indole and glyceraldehyde 3-phosphate. This Bifidobacterium longum (strain NCC 2705) protein is Tryptophan synthase alpha chain.